A 333-amino-acid polypeptide reads, in one-letter code: Ketol-acid reductoisomerase (NADP(+)) (333 aa).

A KARI N-terminal Rossmann domain is found at 2–182 (AKLYYEKDCN…GGARAGVLKT (181 aa)). NADP(+)-binding positions include 25–28 (YGSQ), serine 51, serine 53, and 83–86 (DEKQ). The active site involves histidine 108. Position 134 (glycine 134) interacts with NADP(+). Residues 183-328 (TFKEETETDL…KELRDMMSWS (146 aa)) form the KARI C-terminal knotted domain. 4 residues coordinate Mg(2+): aspartate 191, glutamate 195, glutamate 227, and glutamate 231. Substrate is bound at residue serine 252.

The protein belongs to the ketol-acid reductoisomerase family. Mg(2+) serves as cofactor.

The enzyme catalyses (2R)-2,3-dihydroxy-3-methylbutanoate + NADP(+) = (2S)-2-acetolactate + NADPH + H(+). It catalyses the reaction (2R,3R)-2,3-dihydroxy-3-methylpentanoate + NADP(+) = (S)-2-ethyl-2-hydroxy-3-oxobutanoate + NADPH + H(+). It functions in the pathway amino-acid biosynthesis; L-isoleucine biosynthesis; L-isoleucine from 2-oxobutanoate: step 2/4. It participates in amino-acid biosynthesis; L-valine biosynthesis; L-valine from pyruvate: step 2/4. In terms of biological role, involved in the biosynthesis of branched-chain amino acids (BCAA). Catalyzes an alkyl-migration followed by a ketol-acid reduction of (S)-2-acetolactate (S2AL) to yield (R)-2,3-dihydroxy-isovalerate. In the isomerase reaction, S2AL is rearranged via a Mg-dependent methyl migration to produce 3-hydroxy-3-methyl-2-ketobutyrate (HMKB). In the reductase reaction, this 2-ketoacid undergoes a metal-dependent reduction by NADPH to yield (R)-2,3-dihydroxy-isovalerate. The chain is Ketol-acid reductoisomerase (NADP(+)) from Alkaliphilus metalliredigens (strain QYMF).